Here is a 167-residue protein sequence, read N- to C-terminus: Small ribosomal subunit protein uS5 (167 aa).

Residues 12-75 (IEDRVVAINR…ETARKSLIEV (64 aa)) form the S5 DRBM domain.

Belongs to the universal ribosomal protein uS5 family. In terms of assembly, part of the 30S ribosomal subunit. Contacts proteins S4 and S8.

Functionally, with S4 and S12 plays an important role in translational accuracy. Located at the back of the 30S subunit body where it stabilizes the conformation of the head with respect to the body. The polypeptide is Small ribosomal subunit protein uS5 (Pediococcus pentosaceus (strain ATCC 25745 / CCUG 21536 / LMG 10740 / 183-1w)).